A 346-amino-acid polypeptide reads, in one-letter code: Heat-inducible transcription repressor HrcA (346 aa).

This sequence belongs to the HrcA family.

In terms of biological role, negative regulator of class I heat shock genes (grpE-dnaK-dnaJ and groELS operons). Prevents heat-shock induction of these operons. The chain is Heat-inducible transcription repressor HrcA from Pediococcus pentosaceus (strain ATCC 25745 / CCUG 21536 / LMG 10740 / 183-1w).